The sequence spans 57 residues: Protein translocase subunit SecE (57 aa).

A helical membrane pass occupies residues 33-53 (GLGILLVGFIGFVIFSIMTFV).

It belongs to the SecE/SEC61-gamma family. In terms of assembly, component of the Sec protein translocase complex. Heterotrimer consisting of SecY (alpha), SecG (beta) and SecE (gamma) subunits. The heterotrimers can form oligomers, although 1 heterotrimer is thought to be able to translocate proteins. Interacts with the ribosome. May interact with SecDF, and other proteins may be involved.

It is found in the cell membrane. Functionally, essential subunit of the Sec protein translocation channel SecYEG. Clamps together the 2 halves of SecY. May contact the channel plug during translocation. This chain is Protein translocase subunit SecE, found in Natronomonas pharaonis (strain ATCC 35678 / DSM 2160 / CIP 103997 / JCM 8858 / NBRC 14720 / NCIMB 2260 / Gabara) (Halobacterium pharaonis).